Reading from the N-terminus, the 963-residue chain is Iron-responsive element-binding protein 2 (963 aa).

Residues Cys-512, Cys-578, and Cys-581 each coordinate [4Fe-4S] cluster.

This sequence belongs to the aconitase/IPM isomerase family. In terms of assembly, interacts with RBCK1 isoform 1 and isoform 2 only in iron-rich conditions. Interacts (when associated with the 4Fe-4S) with FBXL5. Interacts with CIAO1 and CIAO2A. The cofactor is [4Fe-4S] cluster. Ubiquitinated and degraded by the proteasome in presence of high level of iron and oxygen. Ubiquitinated by a SCF complex containing FBXL5. Upon iron and oxygen depletion FBXL5 is degraded, preventing ubiquitination and allowing its RNA-binding activity.

It localises to the cytoplasm. In terms of biological role, RNA-binding protein that binds to iron-responsive elements (IRES), which are stem-loop structures found in the 5'-UTR of ferritin, and delta aminolevulinic acid synthase mRNAs, and in the 3'-UTR of transferrin receptor mRNA. Binding to the IRE element in ferritin results in the repression of its mRNA translation. Binding of the protein to the transferrin receptor mRNA inhibits the degradation of this otherwise rapidly degraded mRNA. In Homo sapiens (Human), this protein is Iron-responsive element-binding protein 2 (IREB2).